A 341-amino-acid chain; its full sequence is DNA-directed RNA polymerase subunit alpha (341 aa).

Residues methionine 1–glutamate 237 form an alpha N-terminal domain (alpha-NTD) region. The interval threonine 247–asparagine 341 is alpha C-terminal domain (alpha-CTD).

The protein belongs to the RNA polymerase alpha chain family. As to quaternary structure, homodimer. The RNAP catalytic core consists of 2 alpha, 1 beta, 1 beta' and 1 omega subunit. When a sigma factor is associated with the core the holoenzyme is formed, which can initiate transcription.

It carries out the reaction RNA(n) + a ribonucleoside 5'-triphosphate = RNA(n+1) + diphosphate. Functionally, DNA-dependent RNA polymerase catalyzes the transcription of DNA into RNA using the four ribonucleoside triphosphates as substrates. The protein is DNA-directed RNA polymerase subunit alpha of Rickettsia bellii (strain RML369-C).